The primary structure comprises 320 residues: Serpentine receptor class delta-28 (320 aa).

7 helical membrane-spanning segments follow: residues 5 to 25 (LLHT…MYLA), 38 to 58 (AIIT…FFVM), 83 to 103 (ACYI…IWMI), 122 to 142 (SLVF…ATWI), 176 to 196 (LTLI…YAWI), 230 to 250 (FLPS…TQLI), and 258 to 278 (LVSV…ILFV).

Belongs to the nematode receptor-like protein srd family.

The protein resides in the membrane. The polypeptide is Serpentine receptor class delta-28 (srd-28) (Caenorhabditis elegans).